The chain runs to 487 residues: MAIAEWRQQLANGEVSARELTDHHLARIEAVEPGIHAFLEVTAERARADADRVDEARASGEDLPPLAGIPLAIKDNLCTRGVRTTCSSRMLEQFVPPYESTVTERLWAAGAVLLGKTNLDEFAMGGSTETSAFGPTANPWNPEHVPGGSSGGSAAAVASGECLASIGSDTGGSIRQPASFCGVVGLKPTYGRISRYGLVAFASSLDQVGPFSHSVADAAELLQVMAGADPRDSTCLNAPVPDYCAALGRPVEGLKVGLVKECFEQEGLDPQVKASVLAAAQQLQALGADLVDVSCPRFNDGIATYYVIAPSEASANLARYDGVKYGYRAEDAASLAAMTARSRAEGFGSEVQRRILIGTYALSAGYVDAYYKKAQQVRTLIRRDFDAAFQSVDVLLTPTAPGTAFRNGAHADDPLAMYLSDLLTIPANLAGLPAISVPCGFDTGGLPIGVQLIGNVLEEPLLLQVAHQFEQAADVMKTRPEAAFIPG.

Residues K74 and S149 each act as charge relay system in the active site. The active-site Acyl-ester intermediate is S173.

The protein belongs to the amidase family. GatA subfamily. As to quaternary structure, heterotrimer of A, B and C subunits.

The enzyme catalyses L-glutamyl-tRNA(Gln) + L-glutamine + ATP + H2O = L-glutaminyl-tRNA(Gln) + L-glutamate + ADP + phosphate + H(+). Its function is as follows. Allows the formation of correctly charged Gln-tRNA(Gln) through the transamidation of misacylated Glu-tRNA(Gln) in organisms which lack glutaminyl-tRNA synthetase. The reaction takes place in the presence of glutamine and ATP through an activated gamma-phospho-Glu-tRNA(Gln). In Synechococcus sp. (strain WH7803), this protein is Glutamyl-tRNA(Gln) amidotransferase subunit A.